Consider the following 189-residue polypeptide: Segregation and condensation protein B (189 aa).

Belongs to the ScpB family. In terms of assembly, homodimer. Homodimerization may be required to stabilize the binding of ScpA to the Smc head domains. Component of a cohesin-like complex composed of ScpA, ScpB and the Smc homodimer, in which ScpA and ScpB bind to the head domain of Smc. The presence of the three proteins is required for the association of the complex with DNA.

The protein localises to the cytoplasm. In terms of biological role, participates in chromosomal partition during cell division. May act via the formation of a condensin-like complex containing Smc and ScpA that pull DNA away from mid-cell into both cell halves. The chain is Segregation and condensation protein B from Streptococcus pneumoniae serotype 19F (strain G54).